Consider the following 435-residue polypeptide: MTEMVPHARSAEIMARARMRFPGGVNSPVRAFRGVGGEPFVAARGKGARIWDVDGNEYFDYVLSWGPLVLGHAPDVVLHAVSQAMLEGTSFGMPTAREVELADAIAGRMPHLEMVRFTSSGTEATMSIARLARAVTKREHILKFDGCYHGHGDSFLVRAGSGVATLGLPDSPGVPEALAKLTLTCAFNDLDAVERIARDVPLAAIMLEPIVGNSGFIEPTPGFIQGLRRIADETGALLVFDEVMTGFRIAFGGATEYFGVTPDLTALGKVIGGGLPVAAYGGSRTLMEHIAPTGPVYQAGTLSGNPLAMAAGIATLGALTRSVHDEITNQTAALVDGLRGIATRRGVPLSARHVGSMWGFFFRDGDVHSFDDAKQSDVALFRRFFHAARTRGVSLAPSAFEAAFMSAAHGPAEVGETLSRLDDALGAALTDTAGH.

Position 269 is an N6-(pyridoxal phosphate)lysine (K269).

This sequence belongs to the class-III pyridoxal-phosphate-dependent aminotransferase family. HemL subfamily. In terms of assembly, homodimer. The cofactor is pyridoxal 5'-phosphate.

It localises to the cytoplasm. The enzyme catalyses (S)-4-amino-5-oxopentanoate = 5-aminolevulinate. It functions in the pathway porphyrin-containing compound metabolism; protoporphyrin-IX biosynthesis; 5-aminolevulinate from L-glutamyl-tRNA(Glu): step 2/2. This chain is Glutamate-1-semialdehyde 2,1-aminomutase, found in Gemmatimonas aurantiaca (strain DSM 14586 / JCM 11422 / NBRC 100505 / T-27).